A 448-amino-acid polypeptide reads, in one-letter code: Methylenetetrahydrofolate--tRNA-(uracil-5-)-methyltransferase TrmFO (448 aa).

Position 13–18 (13–18) interacts with FAD; sequence GAGLAG.

It belongs to the MnmG family. TrmFO subfamily. FAD is required as a cofactor.

The protein localises to the cytoplasm. It carries out the reaction uridine(54) in tRNA + (6R)-5,10-methylene-5,6,7,8-tetrahydrofolate + NADH + H(+) = 5-methyluridine(54) in tRNA + (6S)-5,6,7,8-tetrahydrofolate + NAD(+). It catalyses the reaction uridine(54) in tRNA + (6R)-5,10-methylene-5,6,7,8-tetrahydrofolate + NADPH + H(+) = 5-methyluridine(54) in tRNA + (6S)-5,6,7,8-tetrahydrofolate + NADP(+). Its function is as follows. Catalyzes the folate-dependent formation of 5-methyl-uridine at position 54 (M-5-U54) in all tRNAs. The chain is Methylenetetrahydrofolate--tRNA-(uracil-5-)-methyltransferase TrmFO from Streptococcus pyogenes serotype M5 (strain Manfredo).